The sequence spans 112 residues: uncharacterized protein (112 aa).

The chain crosses the membrane as a helical span at residues 62-82 (THSFIFFILFLFIFIFLTFSH).

Its subcellular location is the membrane. This is an uncharacterized protein from Saccharomyces cerevisiae (strain ATCC 204508 / S288c) (Baker's yeast).